We begin with the raw amino-acid sequence, 249 residues long: 2,3-bisphosphoglycerate-dependent phosphoglycerate mutase (249 aa).

Substrate is bound by residues 8–15 (RHGESTWN), 21–22 (TG), Arg60, 87–90 (ERHY), Lys98, 114–115 (RR), and 183–184 (GN). His9 (tele-phosphohistidine intermediate) is an active-site residue. Glu87 acts as the Proton donor/acceptor in catalysis.

This sequence belongs to the phosphoglycerate mutase family. BPG-dependent PGAM subfamily. Homodimer.

It catalyses the reaction (2R)-2-phosphoglycerate = (2R)-3-phosphoglycerate. Its pathway is carbohydrate degradation; glycolysis; pyruvate from D-glyceraldehyde 3-phosphate: step 3/5. Catalyzes the interconversion of 2-phosphoglycerate and 3-phosphoglycerate. The polypeptide is 2,3-bisphosphoglycerate-dependent phosphoglycerate mutase (Aromatoleum aromaticum (strain DSM 19018 / LMG 30748 / EbN1) (Azoarcus sp. (strain EbN1))).